The chain runs to 206 residues: Small ribosomal subunit protein uS4 (206 aa).

The S4 RNA-binding domain maps to 96–158 (GRLDNVVYRM…AKQQTRIKAA (63 aa)).

This sequence belongs to the universal ribosomal protein uS4 family. In terms of assembly, part of the 30S ribosomal subunit. Contacts protein S5. The interaction surface between S4 and S5 is involved in control of translational fidelity.

Its function is as follows. One of the primary rRNA binding proteins, it binds directly to 16S rRNA where it nucleates assembly of the body of the 30S subunit. With S5 and S12 plays an important role in translational accuracy. The protein is Small ribosomal subunit protein uS4 of Vibrio vulnificus (strain CMCP6).